The following is a 499-amino-acid chain: Phenylalanine--tRNA ligase alpha subunit (499 aa).

L-phenylalanine-binding positions include threonine 342, glutamine 381 to aspartate 383, and phenylalanine 422. Residue glutamate 424 participates in Mg(2+) binding. Phenylalanine 447 lines the L-phenylalanine pocket.

Belongs to the class-II aminoacyl-tRNA synthetase family. Phe-tRNA synthetase alpha subunit type 2 subfamily. Tetramer of two alpha and two beta subunits. Mg(2+) is required as a cofactor.

It localises to the cytoplasm. It catalyses the reaction tRNA(Phe) + L-phenylalanine + ATP = L-phenylalanyl-tRNA(Phe) + AMP + diphosphate + H(+). This chain is Phenylalanine--tRNA ligase alpha subunit, found in Thermococcus gammatolerans (strain DSM 15229 / JCM 11827 / EJ3).